The following is a 283-amino-acid chain: Pantothenate synthetase (283 aa).

34-41 (MGALHDGH) contributes to the ATP binding site. Residue His-41 is the Proton donor of the active site. Gln-65 is a binding site for (R)-pantoate. Gln-65 serves as a coordination point for beta-alanine. 152-155 (GSKD) is a binding site for ATP. Gln-158 contacts (R)-pantoate. ATP contacts are provided by residues Val-181 and 189-192 (MSSR).

It belongs to the pantothenate synthetase family. As to quaternary structure, homodimer.

The protein localises to the cytoplasm. It catalyses the reaction (R)-pantoate + beta-alanine + ATP = (R)-pantothenate + AMP + diphosphate + H(+). It participates in cofactor biosynthesis; (R)-pantothenate biosynthesis; (R)-pantothenate from (R)-pantoate and beta-alanine: step 1/1. In terms of biological role, catalyzes the condensation of pantoate with beta-alanine in an ATP-dependent reaction via a pantoyl-adenylate intermediate. In Rhodopseudomonas palustris (strain ATCC BAA-98 / CGA009), this protein is Pantothenate synthetase.